The primary structure comprises 336 residues: Phosphate acyltransferase (336 aa).

It belongs to the PlsX family. In terms of assembly, homodimer. Probably interacts with PlsY.

It is found in the cytoplasm. The enzyme catalyses a fatty acyl-[ACP] + phosphate = an acyl phosphate + holo-[ACP]. It functions in the pathway lipid metabolism; phospholipid metabolism. In terms of biological role, catalyzes the reversible formation of acyl-phosphate (acyl-PO(4)) from acyl-[acyl-carrier-protein] (acyl-ACP). This enzyme utilizes acyl-ACP as fatty acyl donor, but not acyl-CoA. The sequence is that of Phosphate acyltransferase from Pseudomonas paraeruginosa (strain DSM 24068 / PA7) (Pseudomonas aeruginosa (strain PA7)).